A 256-amino-acid polypeptide reads, in one-letter code: UPF0246 protein Bpet1601 (256 aa).

Belongs to the UPF0246 family.

In Bordetella petrii (strain ATCC BAA-461 / DSM 12804 / CCUG 43448), this protein is UPF0246 protein Bpet1601.